The chain runs to 80 residues: Acyl carrier protein (80 aa).

One can recognise a Carrier domain in the interval 4-79 (EAILEKVRSI…DAVKYIEDKQ (76 aa)). S39 is modified (O-(pantetheine 4'-phosphoryl)serine).

The protein belongs to the acyl carrier protein (ACP) family. In terms of processing, 4'-phosphopantetheine is transferred from CoA to a specific serine of apo-ACP by AcpS. This modification is essential for activity because fatty acids are bound in thioester linkage to the sulfhydryl of the prosthetic group.

The protein resides in the cytoplasm. The protein operates within lipid metabolism; fatty acid biosynthesis. In terms of biological role, carrier of the growing fatty acid chain in fatty acid biosynthesis. This chain is Acyl carrier protein, found in Prochlorococcus marinus (strain SARG / CCMP1375 / SS120).